The following is a 509-amino-acid chain: Steroid 17-alpha-hydroxylase/17,20 lyase (509 aa).

Heme is bound at residue Cys440.

It belongs to the cytochrome P450 family. Requires heme as cofactor.

The protein resides in the endoplasmic reticulum membrane. Its subcellular location is the microsome membrane. The catalysed reaction is a C21-steroid + reduced [NADPH--hemoprotein reductase] + O2 = a 17alpha-hydroxy-C21-steroid + oxidized [NADPH--hemoprotein reductase] + H2O + H(+). It carries out the reaction progesterone + reduced [NADPH--hemoprotein reductase] + O2 = 17alpha-hydroxyprogesterone + oxidized [NADPH--hemoprotein reductase] + H2O + H(+). It catalyses the reaction pregnenolone + reduced [NADPH--hemoprotein reductase] + O2 = 17alpha-hydroxypregnenolone + oxidized [NADPH--hemoprotein reductase] + H2O + H(+). The enzyme catalyses 17alpha-hydroxyprogesterone + reduced [NADPH--hemoprotein reductase] + O2 = androst-4-ene-3,17-dione + acetate + oxidized [NADPH--hemoprotein reductase] + H2O + 2 H(+). The catalysed reaction is 17alpha-hydroxyprogesterone + reduced [NADPH--hemoprotein reductase] + O2 = 16alpha,17alpha-dihydroxyprogesterone + oxidized [NADPH--hemoprotein reductase] + H2O + H(+). It carries out the reaction 16alpha,17alpha-dihydroxyprogesterone + reduced [NADPH--hemoprotein reductase] + O2 = 6beta,16alpha,17alpha-trihydroxyprogesterone + oxidized [NADPH--hemoprotein reductase] + H2O + H(+). It catalyses the reaction 17alpha-hydroxypregnenolone + reduced [NADPH--hemoprotein reductase] + O2 = 3beta-hydroxyandrost-5-en-17-one + acetate + oxidized [NADPH--hemoprotein reductase] + H2O + 2 H(+). The enzyme catalyses 16alpha,17alpha-dihydroxypregnenolone + reduced [NADPH--hemoprotein reductase] + O2 = 3beta,16alpha-dihydroxy-androst-5-en-17-one + acetate + oxidized [NADPH--hemoprotein reductase] + H2O + 2 H(+). The catalysed reaction is 3beta-hydroxyandrost-5-en-17-one + reduced [NADPH--hemoprotein reductase] + O2 = 3beta,16alpha-dihydroxy-androst-5-en-17-one + oxidized [NADPH--hemoprotein reductase] + H2O + H(+). It carries out the reaction androst-4-ene-3,17-dione + reduced [NADPH--hemoprotein reductase] + O2 = 16alpha-hydroxyandrost-4-ene-3,17-dione + oxidized [NADPH--hemoprotein reductase] + H2O + H(+). It participates in steroid hormone biosynthesis. Its pathway is steroid biosynthesis; glucocorticoid biosynthesis. Its activity is regulated as follows. Regulated predominantly by intracellular cAMP levels. The 17,20-lyase activity is stimulated by cytochrome b5, which acts as an allosteric effector increasing the Vmax of the lyase activity. Its function is as follows. A cytochrome P450 monooxygenase involved in corticoid and androgen biosynthesis. Catalyzes 17-alpha hydroxylation of C21 steroids, which is common for both pathways. A second oxidative step, required only for androgen synthesis, involves an acyl-carbon cleavage. The 17-alpha hydroxy intermediates, as part of adrenal glucocorticoids biosynthesis pathway, are precursors of cortisol. Hydroxylates steroid hormones, pregnenolone and progesterone to form 17-alpha hydroxy metabolites, followed by the cleavage of the C17-C20 bond to form C19 steroids, dehydroepiandrosterone (DHEA) and androstenedione. Has 16-alpha hydroxylase activity. Catalyzes 16-alpha hydroxylation of 17-alpha hydroxy pregnenolone, followed by the cleavage of the C17-C20 bond to form 16-alpha-hydroxy DHEA. Also 16-alpha hydroxylates androgens, relevant for estriol synthesis. Mechanistically, uses molecular oxygen inserting one oxygen atom into a substrate, and reducing the second into a water molecule, with two electrons provided by NADPH via cytochrome P450 reductase (CPR; NADPH-ferrihemoprotein reductase). The protein is Steroid 17-alpha-hydroxylase/17,20 lyase (Cyp17a1) of Peromyscus leucopus (White-footed mouse).